Consider the following 462-residue polypeptide: Acetyl-CoA decarbonylase/synthase complex subunit gamma (462 aa).

A 4Fe-4S domain is found at 1 to 60 (MAQLSAMDVYNLLPKANCGACGCKTCMEFATKLVNREAKPEDCPKLDDESLEKLQELLAP). Positions 18, 21, 26, and 43 each coordinate [4Fe-4S] cluster.

Heterodimer of delta and gamma chains. The ACDS complex is made up of alpha, epsilon, beta, gamma and delta chains with a probable stoichiometry of (alpha(2)epsilon(2))(4)-beta(8)-(gamma(1)delta(1))(8). Corrinoid is required as a cofactor. Requires [4Fe-4S] cluster as cofactor.

The enzyme catalyses 5,6,7,8-tetrahydrosarcinapterin + methyl-Co(III)-[corrinoid Fe-S protein] = 5-methyltetrahydrosarcinapterin + Co(I)-[corrinoid Fe-S protein] + H(+). Part of a complex that catalyzes the reversible cleavage of acetyl-CoA, allowing autotrophic growth from CO(2). In Methanopyrus kandleri (strain AV19 / DSM 6324 / JCM 9639 / NBRC 100938), this protein is Acetyl-CoA decarbonylase/synthase complex subunit gamma.